Reading from the N-terminus, the 297-residue chain is tRNA (guanine-N(7)-)-methyltransferase (297 aa).

Residues Gly-101, 124–125 (EI), 171–172 (NT), and Cys-191 contribute to the S-adenosyl-L-methionine site. Asp-194 is an active-site residue. 270–272 (TEE) provides a ligand contact to S-adenosyl-L-methionine.

Belongs to the class I-like SAM-binding methyltransferase superfamily. TrmB family. In terms of assembly, forms a complex with trm82.

It localises to the nucleus. It carries out the reaction guanosine(46) in tRNA + S-adenosyl-L-methionine = N(7)-methylguanosine(46) in tRNA + S-adenosyl-L-homocysteine. It participates in tRNA modification; N(7)-methylguanine-tRNA biosynthesis. Catalyzes the formation of N(7)-methylguanine at position 46 (m7G46) in tRNA. This chain is tRNA (guanine-N(7)-)-methyltransferase (trm8), found in Aspergillus niger (strain ATCC MYA-4892 / CBS 513.88 / FGSC A1513).